The primary structure comprises 400 residues: Transposase for insertion sequence element ISRM3 (400 aa).

It belongs to the transposase mutator family.

Functionally, required for the transposition of the insertion element. This chain is Transposase for insertion sequence element ISRM3, found in Rhizobium meliloti (strain 1021) (Ensifer meliloti).